Consider the following 161-residue polypeptide: tRNA-acetylating toxin 1 (161 aa).

Acetyl-CoA-binding residues include Leu92, Val94, His99, Gly100, Gly102, Gly104, Ala105, Leu132, and Glu135. Residue Tyr140 is part of the active site. His142 is a binding site for acetyl-CoA.

Belongs to the acetyltransferase family. GNAT subfamily. Homodimer (in absence of antitoxin). Forms a complex with cognate antitoxin TacA1. Forms a 4:2 antitoxin:toxin complex with cognate antitoxin TacA1.

It catalyses the reaction glycyl-tRNA(Gly) + acetyl-CoA = N-acetylglycyl-tRNA(Gly) + CoA + H(+). Its function is as follows. Toxic component of a type II toxin-antitoxin (TA) system. Acetylates tRNA and inhibits translation, does not acetylate uncharged tRNA. Upon expression in situ acetylates only Gly-tRNA(Gly). In vitro acetylates mainly Gly and Ile/Leu. Upon induction of the toxin gene in lag phase in rich medium (but not mid-exponential phase) the lag phase is extended by several hours, locking bacteria in a non-growth state. Neutralized only by cognate antitoxin TacA1 (A8), but not by TacA2 or TacA3. Its toxic effect is neutralized by expression of peptidyl-tRNA hydrolase (pth) in lag phase. NAD-dependent protein deacylase (cobB) also play a role in detoxifying TacT targets. Expression increases persister cell formation, which is also abolished by either cognate antitoxin or Pth expression. Plays a role in persister cell formation. In terms of biological role, the TacA1-TacT1 complex binds (and probably represses) its own promoter DNA but not that of tacA3-tacT3, it does not repress the tacA3-tacT3 promoter. This Salmonella typhimurium (strain 14028s / SGSC 2262) protein is tRNA-acetylating toxin 1.